A 1318-amino-acid chain; its full sequence is Ubiquitin carboxyl-terminal hydrolase 19 (1318 aa).

The interval 1–109 is disordered; the sequence is MSGGASATGP…GACEDPHDLL (109 aa). Residues 1–1291 lie on the Cytoplasmic side of the membrane; it reads MSGGASATGP…TTPDEGCLRY (1291 aa). The span at 28-44 shows a compositional bias: basic and acidic residues; that stretch reads DRANQESKDGDPRKETG. Residues 83–94 show a composition bias toward polar residues; that stretch reads PSSSGSASTPQE. Residues 95–107 show a composition bias toward basic and acidic residues; the sequence is EQTKEGACEDPHD. One can recognise a CS 1 domain in the interval 113-202; sequence TPELLLDWRQ…VPMLTWPSLL (90 aa). Residues 234 to 255 are disordered; the sequence is KAVPPGNDPVSPAMVRSRNPGK. S244 is modified (phosphoserine). The region spanning 282-384 is the CS 2 domain; the sequence is LAFVKNDSYE…RQSQRWGGLE (103 aa). The tract at residues 390 to 479 is disordered; it reads VGGAKVAVPT…PMPHSPVSGD (90 aa). 2 stretches are compositionally biased toward basic and acidic residues: residues 420-436 and 447-457; these read EEAR…RSED and PMEHVTPKPET. Residues 497-1214 enclose the USP domain; that stretch reads TGLVNLGNTC…YAYVLFYRRR (718 aa). Catalysis depends on C506, which acts as the Nucleophile. Residues C791, C794, C808, C811, C817, C821, H829, and C833 each coordinate Zn(2+). Residues 791 to 833 form an MYND-type zinc finger; sequence CAACQRKQQSEDEKLKRCTRCYRVGYCNQLCQKTHWPDHKGLC. H1165 (proton acceptor) is an active-site residue. A compositionally biased stretch (basic and acidic residues) spans 1218 to 1232; that stretch reads VERPPRAGHSEHHPD. Positions 1218-1239 are disordered; sequence VERPPRAGHSEHHPDLGPAAEA. The chain crosses the membrane as a helical span at residues 1292 to 1312; the sequence is FVLGTVAALVALVLNVFYPLV. The Lumenal portion of the chain corresponds to 1313 to 1318; it reads SQSRWR.

This sequence belongs to the peptidase C19 family. In terms of assembly, interacts with RNF123. Interacts with BIRC2/c-IAP1, BIRC3/c-IAP2 and XIAP/BIRC4. Interacts with HIF1A (via N-terminus). Interacts (via N-terminus) with HSP90AA1; this interaction activates the deubiquitinase activity of USP19.

The protein localises to the endoplasmic reticulum membrane. The catalysed reaction is Thiol-dependent hydrolysis of ester, thioester, amide, peptide and isopeptide bonds formed by the C-terminal Gly of ubiquitin (a 76-residue protein attached to proteins as an intracellular targeting signal).. Its function is as follows. Deubiquitinating enzyme that regulates the degradation of various proteins by removing ubiquitin moieties, thereby preventing their proteasomal degradation. Stabilizes RNF123, which promotes CDKN1B degradation and contributes to cell proliferation. Decreases the levels of ubiquitinated proteins during skeletal muscle formation and acts to repress myogenesis. Modulates transcription of major myofibrillar proteins. Also involved in turnover of endoplasmic-reticulum-associated degradation (ERAD) substrates. Mechanistically, deubiquitinates and thereby stabilizes several E3 ligases involved in the ERAD pathway including SYVN1 or MARCHF6. Regulates the stability of other E3 ligases including BIRC2/c-IAP1 and BIRC3/c-IAP2 by preventing their ubiquitination. Required for cells to mount an appropriate response to hypoxia by rescuing HIF1A from degradation in a non-catalytic manner and by mediating the deubiquitination of FUNDC1. Attenuates mitochondrial damage and ferroptosis by targeting and stabilizing NADPH oxidase 4/NOX4. Negatively regulates TNF-alpha- and IL-1beta-triggered NF-kappa-B activation by hydrolyzing 'Lys-27'- and 'Lys-63'-linked polyubiquitin chains from MAP3K7. Modulates also the protein level and aggregation of polyQ-expanded huntingtin/HTT through HSP90AA1. The sequence is that of Ubiquitin carboxyl-terminal hydrolase 19 (USP19) from Homo sapiens (Human).